A 293-amino-acid chain; its full sequence is tRNA pseudouridine synthase B (293 aa).

The active-site Nucleophile is Asp38.

It belongs to the pseudouridine synthase TruB family. Type 1 subfamily.

It carries out the reaction uridine(55) in tRNA = pseudouridine(55) in tRNA. Functionally, responsible for synthesis of pseudouridine from uracil-55 in the psi GC loop of transfer RNAs. In Microcystis aeruginosa (strain NIES-843 / IAM M-2473), this protein is tRNA pseudouridine synthase B.